The primary structure comprises 148 residues: UPF0179 protein UNCMA_27840 (148 aa).

Belongs to the UPF0179 family.

This is UPF0179 protein UNCMA_27840 from Methanocella arvoryzae (strain DSM 22066 / NBRC 105507 / MRE50).